The primary structure comprises 207 residues: Acyl-homoserine-lactone synthase (207 aa).

The protein belongs to the autoinducer synthase family.

It carries out the reaction a fatty acyl-[ACP] + S-adenosyl-L-methionine = an N-acyl-L-homoserine lactone + S-methyl-5'-thioadenosine + holo-[ACP] + H(+). Required for the synthesis of N-butanoyl-L-homoserine lactone (BHL), an autoinducer molecule which binds to AhyR. This Aeromonas hydrophila protein is Acyl-homoserine-lactone synthase (ahyI).